Here is a 302-residue protein sequence, read N- to C-terminus: RNA polymerase II holoenzyme cyclin-like subunit (302 aa).

The Cyclin N-terminal domain occupies glutamine 53 to serine 142.

This sequence belongs to the cyclin family. Cyclin C subfamily. In terms of assembly, component of the srb8-11 complex, a regulatory module of the Mediator complex.

It is found in the nucleus. Its function is as follows. Component of the srb8-11 complex. The srb8-11 complex is a regulatory module of the Mediator complex which is itself involved in regulation of basal and activated RNA polymerase II-dependent transcription. The srb8-11 complex may be involved in the transcriptional repression of a subset of genes regulated by Mediator. It may inhibit the association of the Mediator complex with RNA polymerase II to form the holoenzyme complex. The srb8-11 complex phosphorylates the C-terminal domain (CTD) of the largest subunit of RNA polymerase II. The protein is RNA polymerase II holoenzyme cyclin-like subunit (ssn8) of Emericella nidulans (strain FGSC A4 / ATCC 38163 / CBS 112.46 / NRRL 194 / M139) (Aspergillus nidulans).